A 238-amino-acid chain; its full sequence is uncharacterized protein (238 aa).

Residues 10 to 33 (TLLALMISLSLSSLLLLSISHFYV) traverse the membrane as a helical segment.

It localises to the membrane. This is an uncharacterized protein from Haemophilus influenzae (strain ATCC 51907 / DSM 11121 / KW20 / Rd).